The following is a 575-amino-acid chain: Putative export ATP-binding/permease protein RBE_0492 (575 aa).

Residues 20-303 (LIIVIISLLS…IFELLSEMHL (284 aa)) form the ABC transmembrane type-1 domain. 6 helical membrane passes run 21-41 (IIVI…GNVF), 61-81 (ILYI…RSYF), 135-155 (FLSF…LMFF), 158-178 (FKLA…IIKF), 242-262 (ALFF…VIWI), and 277-297 (IISF…IFEL). An ABC transporter domain is found at 336-571 (LEFKNVNFSY…SDLYRTIYKE (236 aa)). Residue 371–378 (GRSGSGKS) coordinates ATP.

The protein belongs to the ABC transporter superfamily. As to quaternary structure, homodimer.

The protein resides in the cell inner membrane. Functionally, part of an ABC transporter complex. Transmembrane domains (TMD) form a pore in the inner membrane and the ATP-binding domain (NBD) is responsible for energy generation. This chain is Putative export ATP-binding/permease protein RBE_0492, found in Rickettsia bellii (strain RML369-C).